The sequence spans 712 residues: DNA ligase (712 aa).

NAD(+)-binding positions include 53-57 (DAEFD), 103-104 (SL), and glutamate 133. Residue lysine 135 is the N6-AMP-lysine intermediate of the active site. 4 residues coordinate NAD(+): arginine 156, glutamate 196, lysine 315, and lysine 339. Residues cysteine 433, cysteine 436, cysteine 452, and cysteine 458 each coordinate Zn(2+). In terms of domain architecture, BRCT spans 622 to 711 (SIERTLEGLS…PERDAEDGEP (90 aa)).

Belongs to the NAD-dependent DNA ligase family. LigA subfamily. Mg(2+) serves as cofactor. Requires Mn(2+) as cofactor.

It catalyses the reaction NAD(+) + (deoxyribonucleotide)n-3'-hydroxyl + 5'-phospho-(deoxyribonucleotide)m = (deoxyribonucleotide)n+m + AMP + beta-nicotinamide D-nucleotide.. Its function is as follows. DNA ligase that catalyzes the formation of phosphodiester linkages between 5'-phosphoryl and 3'-hydroxyl groups in double-stranded DNA using NAD as a coenzyme and as the energy source for the reaction. It is essential for DNA replication and repair of damaged DNA. The protein is DNA ligase of Mycolicibacterium gilvum (strain PYR-GCK) (Mycobacterium gilvum (strain PYR-GCK)).